The primary structure comprises 458 residues: UDP-N-acetylmuramoylalanine--D-glutamate ligase (458 aa).

124–130 is an ATP binding site; sequence GSDGKTT.

Belongs to the MurCDEF family.

The protein resides in the cytoplasm. The catalysed reaction is UDP-N-acetyl-alpha-D-muramoyl-L-alanine + D-glutamate + ATP = UDP-N-acetyl-alpha-D-muramoyl-L-alanyl-D-glutamate + ADP + phosphate + H(+). It functions in the pathway cell wall biogenesis; peptidoglycan biosynthesis. Its function is as follows. Cell wall formation. Catalyzes the addition of glutamate to the nucleotide precursor UDP-N-acetylmuramoyl-L-alanine (UMA). This chain is UDP-N-acetylmuramoylalanine--D-glutamate ligase, found in Clostridium novyi (strain NT).